Consider the following 424-residue polypeptide: MSKEKVLLAYSGGLDTSCILKWLLEQDYEVICFMADVGQTEDFAAAREKALKIGAADVVVKDMKDFFVEKFVWPAVQMGLIYEDRYLLGTSLARPCISKGLMDVAVQRGCSYISHGATGKGNDQIRFELSCYALSPTIRVIAPWRMETFCQRFQGRSDLLEYAKRSNIPVSATTKAPWSMDANIMHISYESGILEDPSVAAPEELYQLTQSPTRAPDTPTVAEIVFKAGLPVRVTELVSGRTMERPVDILAFLNKAGGEHGVGRIDIVENRYIGLKSRGVYETPGVTVLHCAHRDLEIYCLDREVLRVKKYLADRMADYVYNGYWYAPEAEYVRKCILESQKHVSGKVVVEMFKGHVMVTSRESMHSLYNQELASMEVHGNFSPYSSTGFIEINAVRLREHHRVFGTANMTKHFSRTESDMKLI.

Residues 9-17 and Ala35 each bind ATP; that span reads AYSGGLDTS. Positions 86 and 91 each coordinate L-citrulline. 114 to 122 is an ATP binding site; that stretch reads SHGATGKGN. Positions 118, 122, and 123 each coordinate L-aspartate. Residue Asn122 coordinates L-citrulline. L-citrulline contacts are provided by Arg126, Ser179, Ser188, Glu269, and Tyr281.

This sequence belongs to the argininosuccinate synthase family. Homotetramer.

The enzyme catalyses L-citrulline + L-aspartate + ATP = 2-(N(omega)-L-arginino)succinate + AMP + diphosphate + H(+). The protein operates within amino-acid biosynthesis; L-arginine biosynthesis; L-arginine from L-ornithine and carbamoyl phosphate: step 2/3. It participates in nitrogen metabolism; urea cycle; (N(omega)-L-arginino)succinate from L-aspartate and L-citrulline: step 1/1. The sequence is that of Argininosuccinate synthase from Anopheles gambiae (African malaria mosquito).